Here is a 341-residue protein sequence, read N- to C-terminus: Methionine import ATP-binding protein MetN (341 aa).

The region spanning 2 to 237 (IELCGLKKSF…PESLARKMLY (236 aa)) is the ABC transporter domain. Residue 34–41 (GKSGAGKS) coordinates ATP.

This sequence belongs to the ABC transporter superfamily. Methionine importer (TC 3.A.1.24) family. In terms of assembly, the complex is composed of two ATP-binding proteins (MetN), two transmembrane proteins (MetI) and a solute-binding protein (MetQ).

It is found in the cell inner membrane. It carries out the reaction L-methionine(out) + ATP + H2O = L-methionine(in) + ADP + phosphate + H(+). The enzyme catalyses D-methionine(out) + ATP + H2O = D-methionine(in) + ADP + phosphate + H(+). In terms of biological role, part of the ABC transporter complex MetNIQ involved in methionine import. Responsible for energy coupling to the transport system. This Legionella pneumophila (strain Paris) protein is Methionine import ATP-binding protein MetN.